The following is a 78-amino-acid chain: Acyl carrier protein (78 aa).

A Carrier domain is found at 2–77 (SSIEERVKKI…LAIDYINANL (76 aa)). O-(pantetheine 4'-phosphoryl)serine is present on Ser-37.

This sequence belongs to the acyl carrier protein (ACP) family. Post-translationally, 4'-phosphopantetheine is transferred from CoA to a specific serine of apo-ACP by AcpS. This modification is essential for activity because fatty acids are bound in thioester linkage to the sulfhydryl of the prosthetic group.

It localises to the cytoplasm. Its pathway is lipid metabolism; fatty acid biosynthesis. Its function is as follows. Carrier of the growing fatty acid chain in fatty acid biosynthesis. This is Acyl carrier protein from Cellvibrio japonicus (strain Ueda107) (Pseudomonas fluorescens subsp. cellulosa).